The following is a 739-amino-acid chain: Phosphoribosylformylglycinamidine synthase subunit PurL (739 aa).

The active site involves H49. The ATP site is built by Y52 and K91. Residue E93 participates in Mg(2+) binding. Residues 94-97 and R116 each bind substrate; that span reads SHNH. The active-site Proton acceptor is H95. Position 117 (D117) interacts with Mg(2+). Q240 lines the substrate pocket. D268 provides a ligand contact to Mg(2+). A substrate-binding site is contributed by 312–314; that stretch reads ESQ. 2 residues coordinate ATP: D493 and G530. Position 531 (N531) interacts with Mg(2+). Residue S533 coordinates substrate.

This sequence belongs to the FGAMS family. Monomer. Part of the FGAM synthase complex composed of 1 PurL, 1 PurQ and 2 PurS subunits.

It is found in the cytoplasm. It catalyses the reaction N(2)-formyl-N(1)-(5-phospho-beta-D-ribosyl)glycinamide + L-glutamine + ATP + H2O = 2-formamido-N(1)-(5-O-phospho-beta-D-ribosyl)acetamidine + L-glutamate + ADP + phosphate + H(+). It participates in purine metabolism; IMP biosynthesis via de novo pathway; 5-amino-1-(5-phospho-D-ribosyl)imidazole from N(2)-formyl-N(1)-(5-phospho-D-ribosyl)glycinamide: step 1/2. Part of the phosphoribosylformylglycinamidine synthase complex involved in the purines biosynthetic pathway. Catalyzes the ATP-dependent conversion of formylglycinamide ribonucleotide (FGAR) and glutamine to yield formylglycinamidine ribonucleotide (FGAM) and glutamate. The FGAM synthase complex is composed of three subunits. PurQ produces an ammonia molecule by converting glutamine to glutamate. PurL transfers the ammonia molecule to FGAR to form FGAM in an ATP-dependent manner. PurS interacts with PurQ and PurL and is thought to assist in the transfer of the ammonia molecule from PurQ to PurL. The sequence is that of Phosphoribosylformylglycinamidine synthase subunit PurL from Parvibaculum lavamentivorans (strain DS-1 / DSM 13023 / NCIMB 13966).